The chain runs to 340 residues: DNA repair protein RAD51 homolog A (340 aa).

Positions 1-14 (MSSAAQQQQKAAAA) are enriched in low complexity. Residues 1-21 (MSSAAQQQQKAAAAEQEEVEH) form a disordered region. The HhH domain occupies 49-78 (TVEAVAYTPRKDLLQIKGISEAKADKIIEA). An ATP-binding site is contributed by 128 to 135 (GEFRSGKT).

It belongs to the RecA family. RAD51 subfamily. As to quaternary structure, self-associates and may interact with XRCC3 homolog. As to expression, highly expressed in mitotic and meiotic tissues, but low levels in differentiated tissues.

Its subcellular location is the nucleus. In terms of biological role, binds to single and double-stranded DNA and exhibits DNA-dependent ATPase activity. Unwinds duplex DNA. Component of the meiotic recombination pathway. Seems to play a role in mediating chromosome homology search, chromosome pairing and synapsis at early stages and probably chromosome crossing-over at later stages in meiosis. Probably is involved in the repair of meiotic double strand breaks (DBSs) and in homologous recombination. The chain is DNA repair protein RAD51 homolog A (RAD51A) from Zea mays (Maize).